The primary structure comprises 596 residues: Tripeptidyl-peptidase SED2 (596 aa).

An N-terminal signal peptide occupies residues 1-16 (MLVLKFVCLLASVAAA). Residues 18-203 (PTSWSSHKVV…LEAMSEEEFS (186 aa)) constitute a propeptide, removed in mature form. The Peptidase S53 domain maps to 210–596 (LVTTACLREL…NFQALTKVLP (387 aa)). An N-linked (GlcNAc...) asparagine glycan is attached at Asn-265. Active-site charge relay system residues include Glu-286 and Asp-290. Asn-403 carries an N-linked (GlcNAc...) asparagine glycan. Ser-501 acts as the Charge relay system in catalysis. Residues Asp-543 and Ile-544 each coordinate Ca(2+). Asn-572 carries N-linked (GlcNAc...) asparagine glycosylation. Residues Gly-576 and Asp-578 each coordinate Ca(2+).

It depends on Ca(2+) as a cofactor.

The protein resides in the secreted. The protein localises to the extracellular space. The catalysed reaction is Release of an N-terminal tripeptide from a polypeptide.. Secreted tripeptidyl-peptidase which degrades proteins at acidic pHs and is involved in virulence. The protein is Tripeptidyl-peptidase SED2 (SED2) of Arthroderma otae (strain ATCC MYA-4605 / CBS 113480) (Microsporum canis).